The primary structure comprises 316 residues: Ribosomal RNA small subunit methyltransferase H (316 aa).

S-adenosyl-L-methionine is bound by residues 35–37 (AGH), D55, F84, D105, and Q112.

It belongs to the methyltransferase superfamily. RsmH family.

Its subcellular location is the cytoplasm. The enzyme catalyses cytidine(1402) in 16S rRNA + S-adenosyl-L-methionine = N(4)-methylcytidine(1402) in 16S rRNA + S-adenosyl-L-homocysteine + H(+). Specifically methylates the N4 position of cytidine in position 1402 (C1402) of 16S rRNA. The polypeptide is Ribosomal RNA small subunit methyltransferase H (Streptococcus gordonii (strain Challis / ATCC 35105 / BCRC 15272 / CH1 / DL1 / V288)).